A 454-amino-acid chain; its full sequence is Bifunctional protein GlmU (454 aa).

The pyrophosphorylase stretch occupies residues 1–227 (MTQLSVVILA…FMEVEGANNR (227 aa)). UDP-N-acetyl-alpha-D-glucosamine-binding positions include 9–12 (LAAG), K23, Q74, 79–80 (GT), 101–103 (YGD), G138, E152, N167, and N225. D103 contributes to the Mg(2+) binding site. Mg(2+) is bound at residue N225. The segment at 228–248 (LQLAALERFYQKTQAEKLLLA) is linker. The segment at 249-454 (GVRLIDPARF…QGWQRPTKKK (206 aa)) is N-acetyltransferase. Residues R331 and K349 each coordinate UDP-N-acetyl-alpha-D-glucosamine. H361 acts as the Proton acceptor in catalysis. Residues Y364 and N375 each contribute to the UDP-N-acetyl-alpha-D-glucosamine site. Residues A378, 384–385 (NY), S403, A421, and R438 contribute to the acetyl-CoA site.

This sequence in the N-terminal section; belongs to the N-acetylglucosamine-1-phosphate uridyltransferase family. It in the C-terminal section; belongs to the transferase hexapeptide repeat family. In terms of assembly, homotrimer. It depends on Mg(2+) as a cofactor.

Its subcellular location is the cytoplasm. It catalyses the reaction alpha-D-glucosamine 1-phosphate + acetyl-CoA = N-acetyl-alpha-D-glucosamine 1-phosphate + CoA + H(+). It carries out the reaction N-acetyl-alpha-D-glucosamine 1-phosphate + UTP + H(+) = UDP-N-acetyl-alpha-D-glucosamine + diphosphate. The protein operates within nucleotide-sugar biosynthesis; UDP-N-acetyl-alpha-D-glucosamine biosynthesis; N-acetyl-alpha-D-glucosamine 1-phosphate from alpha-D-glucosamine 6-phosphate (route II): step 2/2. It functions in the pathway nucleotide-sugar biosynthesis; UDP-N-acetyl-alpha-D-glucosamine biosynthesis; UDP-N-acetyl-alpha-D-glucosamine from N-acetyl-alpha-D-glucosamine 1-phosphate: step 1/1. It participates in bacterial outer membrane biogenesis; LPS lipid A biosynthesis. In terms of biological role, catalyzes the last two sequential reactions in the de novo biosynthetic pathway for UDP-N-acetylglucosamine (UDP-GlcNAc). The C-terminal domain catalyzes the transfer of acetyl group from acetyl coenzyme A to glucosamine-1-phosphate (GlcN-1-P) to produce N-acetylglucosamine-1-phosphate (GlcNAc-1-P), which is converted into UDP-GlcNAc by the transfer of uridine 5-monophosphate (from uridine 5-triphosphate), a reaction catalyzed by the N-terminal domain. This chain is Bifunctional protein GlmU, found in Actinobacillus pleuropneumoniae serotype 3 (strain JL03).